A 202-amino-acid chain; its full sequence is Large ribosomal subunit protein eL13 (202 aa).

This sequence belongs to the eukaryotic ribosomal protein eL13 family.

This chain is Large ribosomal subunit protein eL13 (RPL13), found in Nicotiana tabacum (Common tobacco).